Here is a 112-residue protein sequence, read N- to C-terminus: MLDEKSSNTASVVVLCTAPDEATAQDLAAKVLAEKLAACATLIPGATSLYYWEGKLEQEYEVQMILKTTVSHQQALLECLKSHHPYQTPELLVLPVTHGDTDYLSWLNASLR.

Cu cation is bound by residues Cys-16, His-83, and His-84.

This sequence belongs to the CutA family. As to quaternary structure, homotrimer. Cu cation is required as a cofactor.

It is found in the cytoplasm. Functionally, involved in resistance toward heavy metals. In Shigella boydii serotype 18 (strain CDC 3083-94 / BS512), this protein is Divalent-cation tolerance protein CutA.